The primary structure comprises 118 residues: Large ribosomal subunit protein uL18 (118 aa).

Residues Met1–Ser20 form a disordered region. Basic residues predominate over residues Lys7–Ser20.

It belongs to the universal ribosomal protein uL18 family. In terms of assembly, part of the 50S ribosomal subunit; part of the 5S rRNA/L5/L18/L25 subcomplex. Contacts the 5S and 23S rRNAs.

This is one of the proteins that bind and probably mediate the attachment of the 5S RNA into the large ribosomal subunit, where it forms part of the central protuberance. This is Large ribosomal subunit protein uL18 from Pediococcus pentosaceus (strain ATCC 25745 / CCUG 21536 / LMG 10740 / 183-1w).